Reading from the N-terminus, the 365-residue chain is MTDIPTLGVEEEFLLVHPGSGAPVALNREVAARAADMDVELQLELTSCQVETATAVVDDTAHLREQLLHLRRTASAAAEHAGARLLAVGLPPTLPHEFPVTDTPRYRDIGERYGMIAHEQGICGCHVHVAVPDRDAAIAVSNRLRPWLPLLLALTANSAIYRNADTGHASWRSVLWARWPSAGPPPHFDSADEYDAAVQMLSHTGVIRDDGMVYWDVRPSANFPTVEVRVADVPATVDETVLFAALVRGCVMTALEDERHGDPVLPLAPYALKAAYWKAARNGVDGDGVDLENHVPAPVSDLLGYLTERTRPALEAAGDHELVTAGLARVTDLGNGATRQRRAWRRNHDVDDVLAEAAAATLEDG.

This sequence belongs to the glutamate--cysteine ligase type 2 family. YbdK subfamily.

The enzyme catalyses L-cysteine + L-glutamate + ATP = gamma-L-glutamyl-L-cysteine + ADP + phosphate + H(+). ATP-dependent carboxylate-amine ligase which exhibits weak glutamate--cysteine ligase activity. This Mycolicibacterium vanbaalenii (strain DSM 7251 / JCM 13017 / BCRC 16820 / KCTC 9966 / NRRL B-24157 / PYR-1) (Mycobacterium vanbaalenii) protein is Putative glutamate--cysteine ligase 2-2.